Reading from the N-terminus, the 397-residue chain is Digeranylgeranylglycerophospholipid reductase (397 aa).

Residues Ala-15, Glu-34, Cys-45, Gly-46, Gly-48, Arg-101, Ala-125, Glu-163, Asp-284, Gly-296, and Ile-297 each coordinate FAD. A 2,3-bis-O-(geranylgeranyl)-sn-glycerol 1-phospholipid contacts are provided by Lys-339 and Val-375.

The protein belongs to the geranylgeranyl reductase family. DGGGPL reductase subfamily. It depends on FAD as a cofactor.

The catalysed reaction is 2,3-bis-O-(phytanyl)-sn-glycerol 1-phosphate + 8 NADP(+) = 2,3-bis-O-(geranylgeranyl)-sn-glycerol 1-phosphate + 8 NADPH + 8 H(+). It carries out the reaction 2,3-bis-O-(phytanyl)-sn-glycerol 1-phosphate + 8 NAD(+) = 2,3-bis-O-(geranylgeranyl)-sn-glycerol 1-phosphate + 8 NADH + 8 H(+). It catalyses the reaction a 2,3-bis-O-phytanyl-sn-glycerol 1-phospholipid + 8 A = a 2,3-bis-O-(geranylgeranyl)-sn-glycerol 1-phospholipid + 8 AH2. The enzyme catalyses CDP-2,3-bis-O-(geranylgeranyl)-sn-glycerol + 8 AH2 = CDP-2,3-bis-O-(phytanyl)-sn-glycerol + 8 A. The catalysed reaction is archaetidylserine + 8 AH2 = 2,3-bis-O-phytanyl-sn-glycero-3-phospho-L-serine + 8 A. It functions in the pathway membrane lipid metabolism; glycerophospholipid metabolism. Is involved in the reduction of 2,3-digeranylgeranylglycerophospholipids (unsaturated archaeols) into 2,3-diphytanylglycerophospholipids (saturated archaeols) in the biosynthesis of archaeal membrane lipids. Catalyzes the formation of archaetidic acid (2,3-di-O-phytanyl-sn-glyceryl phosphate) from 2,3-di-O-geranylgeranylglyceryl phosphate (DGGGP) via the hydrogenation of each double bond of the isoprenoid chains. Is also probably able to reduce double bonds of geranyl groups in CDP-2,3-bis-O-(geranylgeranyl)-sn-glycerol and archaetidylserine, thus acting at various stages in the biosynthesis of archaeal membrane lipids. The chain is Digeranylgeranylglycerophospholipid reductase from Picrophilus torridus (strain ATCC 700027 / DSM 9790 / JCM 10055 / NBRC 100828 / KAW 2/3).